The sequence spans 412 residues: Aurora kinase (412 aa).

Positions 94-119 are disordered; it reads NEKVRPSKSSHIPVKSPIRKKGHSPA. The 254-residue stretch at 148 to 401 folds into the Protein kinase domain; that stretch reads FEIGKVLGKG…LAEVMNHPWI (254 aa). Residues 154–162 and Lys177 each bind ATP; that span reads LGKGKLGKV. The active-site Proton acceptor is the Asp271.

It belongs to the protein kinase superfamily. Ser/Thr protein kinase family. Aurora subfamily.

It localises to the nucleus. The protein resides in the cytoplasm. It is found in the cytoskeleton. Its subcellular location is the spindle. The protein localises to the chromosome. It localises to the centromere. The protein resides in the kinetochore. The catalysed reaction is L-seryl-[protein] + ATP = O-phospho-L-seryl-[protein] + ADP + H(+). The enzyme catalyses L-threonyl-[protein] + ATP = O-phospho-L-threonyl-[protein] + ADP + H(+). Functionally, component of the chromosomal passenger complex (CPC), a complex that acts as a key regulator of chromosome segregation and cytokinesis. Has a role in error-correction of aberrent kinetochore-microtubule attachments to ensure that sister kinetochores become bioriented and connect to opposite poles by promoting spindle assembly checkpoint signaling. This Debaryomyces hansenii (strain ATCC 36239 / CBS 767 / BCRC 21394 / JCM 1990 / NBRC 0083 / IGC 2968) (Yeast) protein is Aurora kinase (IPL1).